Consider the following 584-residue polypeptide: MFAKAFRVKSNTAIKGSDRRKLRADVTTAFPTLGTDQVSELVPGKEELNIVKLYAHKGDAVTVYVSGGNPILFELEKNLYPTVYTLWSYPDLLPTFTTWPLVLEKLVGGADLMLPGLVMPPAGLPQVQKGDLCAISLVGNRAPVAIGVAAMSTAEMLTSGLKGRGFSVLHTYQDHLWRSGNKSSPPSIAPLALDSADLSEEKGSVQMDSTLQGDMRHMTLEGEEENGEVHQAREDKSLSEAPEDTSTRGLNQDSTDSKTLQEQMDELLQQCFLHALKCRVKKADLPLLTSTFLGSHMFSCCPEGRQLDIKKSSYKKLSKFLQQMQQEQIIQVKELSKGVESIVAVDWKHPRITSFVIPEPSPTSQTIQEGSREQPYHPPDIKPLYCVPASMTLLFQESGHKKGSFLEGSEVRTIVINYAKKNDLVDADNKNLVRLDPILCDCILEKNEQHTVMKLPWDSLLTRCLEKLQPAYQVTLPGQEPIVKKGRICPIDITLAQRASNKKVTVVRNLEAYGLDPYSVAAILQQRCQASTTVNPAPGAKDSLQVQIQGNQVHHLGWLLLEEYQLPRKHIQGLEKALKPGKKK.

At methionine 1 the chain carries N-acetylmethionine. A PUA domain is found at 93–173 (LPTFTTWPLV…RGFSVLHTYQ (81 aa)). The disordered stretch occupies residues 223–257 (EEENGEVHQAREDKSLSEAPEDTSTRGLNQDSTDS). Residues 227–238 (GEVHQAREDKSL) are compositionally biased toward basic and acidic residues. Phosphoserine is present on residues serine 237, serine 254, and serine 361. The segment covering 247-257 (TRGLNQDSTDS) has biased composition (polar residues). In terms of domain architecture, SWIB/MDM2 spans 383–467 (PLYCVPASMT…DSLLTRCLEK (85 aa)). The SUI1 domain occupies 491–564 (IDITLAQRAS…HLGWLLLEEY (74 aa)).

It belongs to the eIF2D family.

It localises to the cytoplasm. Functionally, translation initiation factor that is able to deliver tRNA to the P-site of the eukaryotic ribosome in a GTP-independent manner. The binding of Met-tRNA(I) occurs after the AUG codon finds its position in the P-site of 40S ribosomes, the situation that takes place during initiation complex formation on some specific RNAs. Its activity in tRNA binding with 40S subunits does not require the presence of the aminoacyl moiety. Possesses the unique ability to deliver non-Met (elongator) tRNAs into the P-site of the 40S subunit. In addition to its role in initiation, can promote release of deacylated tRNA and mRNA from recycled 40S subunits following ABCE1-mediated dissociation of post-termination ribosomal complexes into subunits. The polypeptide is Eukaryotic translation initiation factor 2D (EIF2D) (Homo sapiens (Human)).